The sequence spans 142 residues: Small ribosomal subunit protein bS6 (142 aa).

Residues 110 to 142 are disordered; the sequence is NKKPSHAKEKHEKTEHAHSHHTEEAGSKESHSE.

This sequence belongs to the bacterial ribosomal protein bS6 family.

In terms of biological role, binds together with bS18 to 16S ribosomal RNA. This chain is Small ribosomal subunit protein bS6, found in Helicobacter acinonychis (strain Sheeba).